The sequence spans 584 residues: Probable pectinesterase/pectinesterase inhibitor (584 aa).

The signal sequence occupies residues 1-22; that stretch reads MAVGKIVISVASMLLVVGVAIG. The pectinesterase inhibitor stretch occupies residues 40–191; it reads NSHQKAVESL…KILSSNAIDI (152 aa). N91 and N105 each carry an N-linked (GlcNAc...) asparagine glycan. The tract at residues 246 to 267 is disordered; that stretch reads AQAGRPGAPADEGIGEGGGGGG. The interval 272–571 is pectinesterase; it reads THVVAKDGSG…TVANWLTPAN (300 aa). Substrate-binding residues include T349 and Q379. D402 acts as the Proton donor; for pectinesterase activity in catalysis. D423 acts as the Nucleophile; for pectinesterase activity in catalysis. Substrate-binding residues include R492 and W494.

It in the N-terminal section; belongs to the PMEI family. In the C-terminal section; belongs to the pectinesterase family. As to expression, pollen, and at much lower levels in pistils and petals.

It is found in the secreted. The protein localises to the cell wall. The catalysed reaction is [(1-&gt;4)-alpha-D-galacturonosyl methyl ester](n) + n H2O = [(1-&gt;4)-alpha-D-galacturonosyl](n) + n methanol + n H(+). Its pathway is glycan metabolism; pectin degradation; 2-dehydro-3-deoxy-D-gluconate from pectin: step 1/5. Functionally, acts in the modification of cell walls via demethylesterification of cell wall pectin. This Brassica napus (Rape) protein is Probable pectinesterase/pectinesterase inhibitor (BP19).